We begin with the raw amino-acid sequence, 250 residues long: Alpha/beta hydrolase nvfD (250 aa).

Catalysis depends on charge relay system residues aspartate 198 and histidine 226.

This sequence belongs to the AB hydrolase superfamily.

It functions in the pathway secondary metabolite biosynthesis; terpenoid biosynthesis. Its function is as follows. Alpha/beta hydrolase; part of the gene cluster that mediates the biosynthesis of novofumigatonin, a heavily oxygenated meroterpenoid containing a unique orthoester moiety. The first step of the pathway is the synthesis of 3,5-dimethylorsellinic acid (DMOA) by the polyketide synthase nvfA via condensation of one acetyl-CoA starter unit with 3 malonyl-CoA units and 2 methylations. DMOA is then converted to farnesyl-DMOA by the farnesyltransferase nvfB. Epoxydation by FAD-dependent monooxygenase nvfK, followed by a protonation-initiated cyclization catalyzed by the terpene cyclase nvfL leads to the production of asnavolin H. The short chain dehydrogenase nvfC then as a 3-OH dehydrogenase of asnovolin H to yield chemesin D. There are two branches to synthesize asnovolin A from chemesin D. In one branch, chemesin D undergoes Baeyer-Villiger oxidation by nvfH, methylation by nvfJ, and enoyl reduction by the nvfM D enoylreductase that reduces the double bond between C-5'and C-6', to form respectively asnovolin I, asnovolin K, and asnovolin A. In the other branch, the methylation precedes the Baeyer-Villiger oxidation and the enoyl reduction to yield asnovolin A via the asnovolin J intermediate. Asnovolin A is further converted to fumigatonoid A by the Fe(II)/2-oxoglutarate-dependent dioxygenase nvfI that catalyzes an endoperoxidation reaction. The alpha/beta hydrolase nvfD then acts as an epimerase that converts fumigatonoid A to its C-5' epimer, which then undergoes spontaneous or nvfD-catalyzed lactonization. The following step utilizes the ketoreductase nvfG to produce fumigatonoid B. The dioxygenase nvfE further converts fumigatonoid B into fumigatonoid C. Finally the Fe(II)/2-oxoglutarate-dependent dioxygenase nvfF catalyzes two rounds of oxidation to transform fumigatonoid C into the end product, novofumigatonin A. The sequence is that of Alpha/beta hydrolase nvfD from Aspergillus novofumigatus (strain IBT 16806).